A 296-amino-acid chain; its full sequence is tRNA dimethylallyltransferase (296 aa).

An ATP-binding site is contributed by 19 to 26 (GPTASGKS). Residue 21 to 26 (TASGKS) coordinates substrate.

It belongs to the IPP transferase family. Monomer. The cofactor is Mg(2+).

It catalyses the reaction adenosine(37) in tRNA + dimethylallyl diphosphate = N(6)-dimethylallyladenosine(37) in tRNA + diphosphate. In terms of biological role, catalyzes the transfer of a dimethylallyl group onto the adenine at position 37 in tRNAs that read codons beginning with uridine, leading to the formation of N6-(dimethylallyl)adenosine (i(6)A). This Dinoroseobacter shibae (strain DSM 16493 / NCIMB 14021 / DFL 12) protein is tRNA dimethylallyltransferase.